The sequence spans 55 residues: Large ribosomal subunit protein bL33 (55 aa).

It belongs to the bacterial ribosomal protein bL33 family.

In Bartonella henselae (strain ATCC 49882 / DSM 28221 / CCUG 30454 / Houston 1) (Rochalimaea henselae), this protein is Large ribosomal subunit protein bL33.